The following is a 365-amino-acid chain: 3-dehydroquinate synthase (365 aa).

Residues 106–110, 130–131, K142, K151, and 169–172 contribute to the NAD(+) site; these read GVIGD, TT, and FFAT. Zn(2+)-binding residues include E184, H247, and H264.

Belongs to the sugar phosphate cyclases superfamily. Dehydroquinate synthase family. Requires NAD(+) as cofactor. Co(2+) is required as a cofactor. It depends on Zn(2+) as a cofactor.

The protein resides in the cytoplasm. It catalyses the reaction 7-phospho-2-dehydro-3-deoxy-D-arabino-heptonate = 3-dehydroquinate + phosphate. Its pathway is metabolic intermediate biosynthesis; chorismate biosynthesis; chorismate from D-erythrose 4-phosphate and phosphoenolpyruvate: step 2/7. Its function is as follows. Catalyzes the conversion of 3-deoxy-D-arabino-heptulosonate 7-phosphate (DAHP) to dehydroquinate (DHQ). This chain is 3-dehydroquinate synthase, found in Listeria innocua serovar 6a (strain ATCC BAA-680 / CLIP 11262).